Reading from the N-terminus, the 84-residue chain is N.vectensis toxin 5 (84 aa).

An N-terminal signal peptide occupies residues 1–21 (MNSLLKVAVVCLVMLVACSSG). Intrachain disulfides connect Cys-45-Cys-77, Cys-47-Cys-68, and Cys-61-Cys-78.

As to expression, expressed in ectodermal gland cells. In adult female tissues, highly transcribed in mesenteries (gametes-producing tissue) and slightly transcribed in tentacles, pharynx and physa.

Functionally, has toxic effects on zebrafish larvae. It causes contractile paralysis and twitching of the tail within 20 minutes, followed by death within 30 minutes. Does not show any toxicity when injected into arthropods (cherry shrimps or grass shrimps). This Nematostella vectensis (Starlet sea anemone) protein is N.vectensis toxin 5.